We begin with the raw amino-acid sequence, 339 residues long: MVKGTIKEKYGIHIRQLSMYQHTYQCFQTPNSYFLIVPVSQFSETELAELYYMSQYLQEQSDPYVSVFIFTKEGELTFEHEGKTYALLKAAPPYSNRAFSIGAELAEFHRKGRGYPYEVKAAGRIGQWKDLWGKRIDQLEAFWQRKVQTPPHEPFDKKMIESFPYYLGLSENAIQYLVDTELDDKPQAADSGTICHQRMERHTWSPESLIRIPADWVFDHASRDLAEYMRHTFLHHRQDFNQQGFLFLQEYEQVTPLSSFSKRLLYSRLLFPLHYFEIVESYYMSSESEKHYFEEQLDFILNDCGRYEQFLNTAQEFMNMRAQKLFVPRVSWLGKGSSR.

It belongs to the CotS family.

The protein resides in the forespore outer membrane. The protein localises to the spore coat. In terms of biological role, involved in sporulation. The chain is Endospore coat-associated protein YutH (yutH) from Bacillus subtilis (strain 168).